Consider the following 352-residue polypeptide: Peptide chain release factor 1 (352 aa).

Q229 bears the N5-methylglutamine mark.

Belongs to the prokaryotic/mitochondrial release factor family. Methylated by PrmC. Methylation increases the termination efficiency of RF1.

It is found in the cytoplasm. In terms of biological role, peptide chain release factor 1 directs the termination of translation in response to the peptide chain termination codons UAG and UAA. This is Peptide chain release factor 1 from Granulibacter bethesdensis (strain ATCC BAA-1260 / CGDNIH1).